We begin with the raw amino-acid sequence, 427 residues long: Glutamate-1-semialdehyde 2,1-aminomutase (427 aa).

The residue at position 267 (Lys-267) is an N6-(pyridoxal phosphate)lysine.

The protein belongs to the class-III pyridoxal-phosphate-dependent aminotransferase family. HemL subfamily. Homodimer. The cofactor is pyridoxal 5'-phosphate.

It is found in the cytoplasm. It catalyses the reaction (S)-4-amino-5-oxopentanoate = 5-aminolevulinate. The protein operates within porphyrin-containing compound metabolism; protoporphyrin-IX biosynthesis; 5-aminolevulinate from L-glutamyl-tRNA(Glu): step 2/2. The protein is Glutamate-1-semialdehyde 2,1-aminomutase of Syntrophotalea carbinolica (strain DSM 2380 / NBRC 103641 / GraBd1) (Pelobacter carbinolicus).